A 99-amino-acid polypeptide reads, in one-letter code: A-type ATP synthase subunit F (99 aa).

The protein belongs to the V-ATPase F subunit family. As to quaternary structure, has multiple subunits with at least A(3), B(3), C, D, E, F, H, I and proteolipid K(x).

Its subcellular location is the cell membrane. Component of the A-type ATP synthase that produces ATP from ADP in the presence of a proton gradient across the membrane. In Methanothrix thermoacetophila (strain DSM 6194 / JCM 14653 / NBRC 101360 / PT) (Methanosaeta thermophila), this protein is A-type ATP synthase subunit F.